The chain runs to 279 residues: MKAKTDFFHMKQAGEPIVMVTAYDFPSAKLAEQAGVDMILVGDSLGMVVLGYDSTIPVTVDDMIHHTKAVRRGAPNTFIVTDMPFMSYHASKEEALQNARRIMQESGANAVKVEGADEVVDMIAALTKAGVPVVAHLGLTPQSVGVLGGYKVQGKDAESAKKLLDDAKQCEQAGAIALVLECVPKQLGAAMARELTIPVIGIGAGAEVDGQVLVYHDLLGYGVTRVPKFVKQYASIQETIVEALANYVADVKLRQFPEPAHTFTMKEEEWVALYGGKQG.

The Mg(2+) site is built by Asp43 and Asp82. Residues 43-44, Asp82, and Lys112 each bind 3-methyl-2-oxobutanoate; that span reads DS. Mg(2+) is bound at residue Glu114. Glu181 acts as the Proton acceptor in catalysis.

It belongs to the PanB family. As to quaternary structure, homodecamer; pentamer of dimers. The cofactor is Mg(2+).

It localises to the cytoplasm. It catalyses the reaction 3-methyl-2-oxobutanoate + (6R)-5,10-methylene-5,6,7,8-tetrahydrofolate + H2O = 2-dehydropantoate + (6S)-5,6,7,8-tetrahydrofolate. It participates in cofactor biosynthesis; (R)-pantothenate biosynthesis; (R)-pantoate from 3-methyl-2-oxobutanoate: step 1/2. In terms of biological role, catalyzes the reversible reaction in which hydroxymethyl group from 5,10-methylenetetrahydrofolate is transferred onto alpha-ketoisovalerate to form ketopantoate. This Geobacillus kaustophilus (strain HTA426) protein is 3-methyl-2-oxobutanoate hydroxymethyltransferase.